The chain runs to 258 residues: MAAPAPRLISVFSSPQELGASLAQLVVQQAACCLADAGARFTLGLSGGSLVSMLARELPAAAAPAGPASLARWTLGFCDERLVPFEHAESTYGLYRTHLLSKLPIFDSQVITINPALPVEEAAEDYAKKLRQAFQGDSIPVFDLLILGVGPDGHTCSLFPDHPLLQEREKIVAPISDSPKPPPQRVTLTLPVLNAARTVIYVATGEGKAAILKRILEDKEENPLPAALVQPSAGKLCWFLDEAAARLLTVPFEKHSTL.

The residue at position 2 (alanine 2) is an N-acetylalanine. Serine 49 bears the Phosphoserine mark. Position 180 is an N6-acetyllysine (lysine 180).

This sequence belongs to the glucosamine/galactosamine-6-phosphate isomerase family. 6-phosphogluconolactonase subfamily.

Its subcellular location is the cytoplasm. It catalyses the reaction 6-phospho-D-glucono-1,5-lactone + H2O = 6-phospho-D-gluconate + H(+). It participates in carbohydrate degradation; pentose phosphate pathway; D-ribulose 5-phosphate from D-glucose 6-phosphate (oxidative stage): step 2/3. Hydrolysis of 6-phosphogluconolactone to 6-phosphogluconate. In Bos taurus (Bovine), this protein is 6-phosphogluconolactonase (PGLS).